The chain runs to 434 residues: Histidine--tRNA ligase (434 aa).

The protein belongs to the class-II aminoacyl-tRNA synthetase family. As to quaternary structure, homodimer.

The protein localises to the cytoplasm. The catalysed reaction is tRNA(His) + L-histidine + ATP = L-histidyl-tRNA(His) + AMP + diphosphate + H(+). In Latilactobacillus sakei subsp. sakei (strain 23K) (Lactobacillus sakei subsp. sakei), this protein is Histidine--tRNA ligase.